The following is a 431-amino-acid chain: Adenylosuccinate synthetase (431 aa).

GTP contacts are provided by residues 15–21 and 43–45; these read GDEGKGK and GHT. Asp-16 (proton acceptor) is an active-site residue. Residues Asp-16 and Gly-43 each contribute to the Mg(2+) site. IMP is bound by residues 16 to 19, 41 to 44, Thr-135, Arg-149, Asn-227, Thr-242, and Arg-306; these read DEGK and NAGH. Residue His-44 is the Proton donor of the active site. 302 to 308 is a binding site for substrate; the sequence is VTTGRKR. Residues Arg-308, 334–336, and 416–418 contribute to the GTP site; these read KLD and GVG.

The protein belongs to the adenylosuccinate synthetase family. Homodimer. Mg(2+) is required as a cofactor.

It localises to the cytoplasm. It carries out the reaction IMP + L-aspartate + GTP = N(6)-(1,2-dicarboxyethyl)-AMP + GDP + phosphate + 2 H(+). Its pathway is purine metabolism; AMP biosynthesis via de novo pathway; AMP from IMP: step 1/2. In terms of biological role, plays an important role in the de novo pathway and in the salvage pathway of purine nucleotide biosynthesis. Catalyzes the first committed step in the biosynthesis of AMP from IMP. This chain is Adenylosuccinate synthetase, found in Monosiga brevicollis (Choanoflagellate).